Here is a 149-residue protein sequence, read N- to C-terminus: Ribosome maturation factor RimP (149 aa).

It belongs to the RimP family.

Its subcellular location is the cytoplasm. Functionally, required for maturation of 30S ribosomal subunits. The sequence is that of Ribosome maturation factor RimP from Clostridium acetobutylicum (strain ATCC 824 / DSM 792 / JCM 1419 / IAM 19013 / LMG 5710 / NBRC 13948 / NRRL B-527 / VKM B-1787 / 2291 / W).